Reading from the N-terminus, the 87-residue chain is NADH dehydrogenase [ubiquinone] 1 alpha subcomplex subunit 4-like 2 (87 aa).

It belongs to the complex I NDUFA4 subunit family.

This Homo sapiens (Human) protein is NADH dehydrogenase [ubiquinone] 1 alpha subcomplex subunit 4-like 2 (NDUFA4L2).